A 103-amino-acid polypeptide reads, in one-letter code: UPF0473 protein LBA0420 (103 aa).

This sequence belongs to the UPF0473 family.

The chain is UPF0473 protein LBA0420 from Lactobacillus acidophilus (strain ATCC 700396 / NCK56 / N2 / NCFM).